Here is a 765-residue protein sequence, read N- to C-terminus: Zinc metalloproteinase nas-37 (765 aa).

An N-terminal signal peptide occupies residues 1–22 (MKSQACLKVCLALIGLVSIVST). Positions 23 to 114 (AYIANDVVSD…SESNSPRSRR (92 aa)) are excised as a propeptide. A Peptidase M12A domain is found at 115–308 (QAHPDPRNFW…AKMINTRYCS (194 aa)). A glycan (N-linked (GlcNAc...) asparagine) is linked at Asn126. 6 disulfide bridges follow: Cys156–Cys307, Cys177–Cys196, Cys311–Cys331, Cys333–Cys342, Cys350–Cys374, and Cys400–Cys420. A Zn(2+)-binding site is contributed by His204. Residue Glu205 is part of the active site. Zn(2+) contacts are provided by His208 and His214. An EGF-like domain is found at 303–343 (NTRYCSNVCQRSLPCLNEGYTDPNNCGRCRCPSGYGGTYCE). Residues 350–458 (CGGSLTASSS…RGFTLKYRAI (109 aa)) enclose the CUB domain. A disordered region spans residues 513 to 573 (KYSSEELYDP…TRPTPTTTVA (61 aa)). Low complexity-rich tracts occupy residues 526 to 545 (LSPS…DASP) and 562 to 573 (ALTRPTPTTTVA). The TSP type-1 domain maps to 576 to 627 (TASWSAWGEWSACSQPCGGCGTKTRVRACYGGNQVCPGSNLDRESCNAHACA). Intrachain disulfides connect Cys588–Cys621, Cys592–Cys626, and Cys604–Cys611.

Requires Zn(2+) as cofactor. In terms of tissue distribution, expressed in hypodermal cells. Not expressed in the seam cells in L1 to L3 larvae, but it is present in seam cells of L4 larvae. Also expressed in attachment points of the cuticle at the anterior end of larvae, in the arcade cells in the mouth, the anterior pharynx, the amphid socket cells, and in the rectal epithelial cells at the posterior end of the larvae (at protein level).

The protein localises to the secreted. Its function is as follows. Metalloprotease. Plays an essential role in molting, a process during larval stages in which a new cuticle is formed and the old cuticle is shed. Required during ecdysis, the opening of the cuticle to allow the worm to escape. The protein is Zinc metalloproteinase nas-37 (nas-37) of Caenorhabditis elegans.